The primary structure comprises 319 residues: 8-methylmenaquinol:fumarate reductase iron-sulfur subunit (319 aa).

Residues 1–96 (MKFIIDRFDG…TFRISPLGNH (96 aa)) enclose the 2Fe-2S ferredoxin-type domain. [2Fe-2S] cluster is bound by residues C51, C56, C59, and C71. 2 4Fe-4S ferredoxin-type domains span residues 139–168 (FDRIIKQWDCILCGSCVSECNKFSADQSDY) and 193–224 (VKPAVANGLWNCVHCHECTNRCPKHISAAEDI). Residues C148, C151, C154, C158, C204, C207, C210, and C214 each coordinate [4Fe-4S] cluster.

It belongs to the succinate dehydrogenase/fumarate reductase iron-sulfur protein family. The MFR complex is composed of three subunits: a flavoprotein (SdhA), an iron-sulfur protein (SdhB), and one hydrophobic anchor protein (SdhE). It depends on [2Fe-2S] cluster as a cofactor. [4Fe-4S] cluster serves as cofactor.

Its subcellular location is the periplasm. The protein resides in the cell membrane. The enzyme catalyses 8-methylmenaquinone-6 + succinate = 8-methylmenaquinol-6 + fumarate. Functionally, iron-sulfur subunit of 8-methylmenaquinol:fumarate reductase (MFR), that catalyzes the reduction of fumarate using 8-methylmenaquinol-6 as electron donor. The complex shows no succinate oxidation activity. Is involved in anaerobic metabolism. The polypeptide is 8-methylmenaquinol:fumarate reductase iron-sulfur subunit (Wolinella succinogenes (strain ATCC 29543 / DSM 1740 / CCUG 13145 / JCM 31913 / LMG 7466 / NCTC 11488 / FDC 602W) (Vibrio succinogenes)).